We begin with the raw amino-acid sequence, 227 residues long: MKFVAFERAKQGTGASRRLRITGRTPGIVYGGTGEPSLIELDHNALWHAIKKEAFHASVLEMEMGGKTEKVLLRDLQMHPFKQQVLHIDFQRVDARTRLTMKVPLHYSGEEESPAVKVENCLVNHVLTELSISCLPKDLPEFIDINLGGLKKGTSLHVKDITLPKGVKFVAKGGQDNPVLVSVSAVSEEAEADAAAAAAAAVPVDPKAAKAAAAKEAKAGAKPPAKK.

Belongs to the bacterial ribosomal protein bL25 family. CTC subfamily. Part of the 50S ribosomal subunit; part of the 5S rRNA/L5/L18/L25 subcomplex. Contacts the 5S rRNA. Binds to the 5S rRNA independently of L5 and L18.

This is one of the proteins that binds to the 5S RNA in the ribosome where it forms part of the central protuberance. The sequence is that of Large ribosomal subunit protein bL25 from Polaromonas sp. (strain JS666 / ATCC BAA-500).